Consider the following 640-residue polypeptide: Threonine--tRNA ligase (640 aa).

Positions 1–61 (MPTITLPDGS…ENDASLQIIT (61 aa)) constitute a TGS domain. Residues 242–533 (DHRKIGKRLG…LIEHYEGAFP (292 aa)) are catalytic. Cys-333, His-384, and His-510 together coordinate Zn(2+).

The protein belongs to the class-II aminoacyl-tRNA synthetase family. In terms of assembly, homodimer. Requires Zn(2+) as cofactor.

Its subcellular location is the cytoplasm. It catalyses the reaction tRNA(Thr) + L-threonine + ATP = L-threonyl-tRNA(Thr) + AMP + diphosphate + H(+). Functionally, catalyzes the attachment of threonine to tRNA(Thr) in a two-step reaction: L-threonine is first activated by ATP to form Thr-AMP and then transferred to the acceptor end of tRNA(Thr). Also edits incorrectly charged L-seryl-tRNA(Thr). This Pseudomonas syringae pv. syringae (strain B728a) protein is Threonine--tRNA ligase.